The chain runs to 242 residues: Mitochondrial intermembrane space import and assembly protein 40 (242 aa).

Residues 1 to 18 constitute a mitochondrion transit peptide; it reads MFARSFSNASRTIARRSL. The segment covering 1–22 has biased composition (polar residues); it reads MFARSFSNASRTIARRSLSTRS. The interval 1-30 is disordered; sequence MFARSFSNASRTIARRSLSTRSGPAPSSLW. Residues 19–34 lie on the Mitochondrial matrix side of the membrane; sequence STRSGPAPSSLWSSRN. Residues 35–51 form a helical; Signal-anchor for type II membrane protein membrane-spanning segment; it reads AVIAGTTLAITALAVTS. Residues 52-242 are Mitochondrial intermembrane-facing; sequence ERRKVFNESA…EETAAPAAAP (191 aa). Residues 58–111 form a disordered region; it reads NESAQKATSPRDSIIAQDSLKENVHKKSVRQDEFSGESTKPEASTSSDSVEKAA. The segment covering 59–68 has biased composition (polar residues); that stretch reads ESAQKATSPR. Positions 76 to 90 are enriched in basic and acidic residues; that stretch reads SLKENVHKKSVRQDE. Positions 93 to 105 are enriched in polar residues; it reads GESTKPEASTSSD. Cystine bridges form between Cys144-Cys146, Cys155-Cys188, and Cys165-Cys178. The 45-residue stretch at 152-196 folds into the CHCH domain; the sequence is TGPCGEQFKAAFSCFVYSEAEPKGVDCVELFKVMQDCFREHPEIY. 2 short sequence motifs (cx9C motif) span residues 155–165 and 178–188; these read CGEQFKAAFSC and CVELFKVMQDC. The tract at residues 215-242 is disordered; it reads DEAPPQEGTMEEKVEAAKEETAAPAAAP. Residues 224-235 show a composition bias toward basic and acidic residues; sequence MEEKVEAAKEET.

Monomer. It depends on Cu(2+) as a cofactor. The cofactor is Zn(2+).

The protein localises to the mitochondrion inner membrane. Its function is as follows. Required for the import and folding of small cysteine-containing proteins (small Tim) in the mitochondrial intermembrane space (IMS). Forms a redox cycle with ERV1 that involves a disulfide relay system. Precursor proteins to be imported into the IMS are translocated in their reduced form into the mitochondria. The oxidized form of MIA40 forms a transient intermolecular disulfide bridge with the reduced precursor protein, resulting in oxidation of the precursor protein that now contains an intramolecular disulfide bond and is able to undergo folding in the IMS. This Cryptococcus neoformans var. neoformans serotype D (strain B-3501A) (Filobasidiella neoformans) protein is Mitochondrial intermembrane space import and assembly protein 40 (MIA40).